Reading from the N-terminus, the 1380-residue chain is DNA-directed RNA polymerase subunit beta (1380 aa).

It belongs to the RNA polymerase beta chain family. As to quaternary structure, the RNAP catalytic core consists of 2 alpha, 1 beta, 1 beta' and 1 omega subunit. When a sigma factor is associated with the core the holoenzyme is formed, which can initiate transcription.

It carries out the reaction RNA(n) + a ribonucleoside 5'-triphosphate = RNA(n+1) + diphosphate. DNA-dependent RNA polymerase catalyzes the transcription of DNA into RNA using the four ribonucleoside triphosphates as substrates. The protein is DNA-directed RNA polymerase subunit beta of Ehrlichia ruminantium (strain Gardel).